We begin with the raw amino-acid sequence, 360 residues long: 3-isopropylmalate dehydrogenase (360 aa).

Position 76 to 89 (76 to 89 (GPKWDKIERDIRPE)) interacts with NAD(+). Positions 96, 106, 134, and 224 each coordinate substrate. The Mg(2+) site is built by D224, D248, and D252. An NAD(+)-binding site is contributed by 282–294 (GSAPDIAGQGIAN).

Belongs to the isocitrate and isopropylmalate dehydrogenases family. LeuB type 1 subfamily. In terms of assembly, homodimer. The cofactor is Mg(2+). Mn(2+) serves as cofactor.

Its subcellular location is the cytoplasm. The catalysed reaction is (2R,3S)-3-isopropylmalate + NAD(+) = 4-methyl-2-oxopentanoate + CO2 + NADH. Its pathway is amino-acid biosynthesis; L-leucine biosynthesis; L-leucine from 3-methyl-2-oxobutanoate: step 3/4. Functionally, catalyzes the oxidation of 3-carboxy-2-hydroxy-4-methylpentanoate (3-isopropylmalate) to 3-carboxy-4-methyl-2-oxopentanoate. The product decarboxylates to 4-methyl-2 oxopentanoate. This is 3-isopropylmalate dehydrogenase from Pseudomonas fluorescens (strain ATCC BAA-477 / NRRL B-23932 / Pf-5).